The following is a 279-amino-acid chain: Digeranylgeranylglyceryl phosphate synthase (279 aa).

6 helical membrane passes run 27 to 47 (LIATGTLTPPSLLLAVIVALI), 90 to 110 (FVGGIAIATLTTTLCLAIAII), 127 to 147 (VLGNVAVAYLAGSVFLFGGAF), 199 to 219 (TGIFAFACACGAVAASLLPFG), 222 to 242 (WGLFYLAGIAVVDLVILFGAF), and 259 to 279 (TSILRAGMFAALAVFAIAAVI).

Belongs to the UbiA prenyltransferase family. DGGGP synthase subfamily. It depends on Mg(2+) as a cofactor.

The protein resides in the cell membrane. The enzyme catalyses sn-3-O-(geranylgeranyl)glycerol 1-phosphate + (2E,6E,10E)-geranylgeranyl diphosphate = 2,3-bis-O-(geranylgeranyl)-sn-glycerol 1-phosphate + diphosphate. The protein operates within membrane lipid metabolism; glycerophospholipid metabolism. Functionally, prenyltransferase that catalyzes the transfer of the geranylgeranyl moiety of geranylgeranyl diphosphate (GGPP) to the C2 hydroxyl of (S)-3-O-geranylgeranylglyceryl phosphate (GGGP). This reaction is the second ether-bond-formation step in the biosynthesis of archaeal membrane lipids. The protein is Digeranylgeranylglyceryl phosphate synthase of Methanoculleus marisnigri (strain ATCC 35101 / DSM 1498 / JR1).